A 469-amino-acid chain; its full sequence is 3-isopropylmalate dehydratase large subunit (469 aa).

Residues cysteine 347, cysteine 410, and cysteine 413 each coordinate [4Fe-4S] cluster.

Belongs to the aconitase/IPM isomerase family. LeuC type 1 subfamily. In terms of assembly, heterodimer of LeuC and LeuD. The cofactor is [4Fe-4S] cluster.

It carries out the reaction (2R,3S)-3-isopropylmalate = (2S)-2-isopropylmalate. Its pathway is amino-acid biosynthesis; L-leucine biosynthesis; L-leucine from 3-methyl-2-oxobutanoate: step 2/4. In terms of biological role, catalyzes the isomerization between 2-isopropylmalate and 3-isopropylmalate, via the formation of 2-isopropylmaleate. This Burkholderia mallei (strain NCTC 10247) protein is 3-isopropylmalate dehydratase large subunit.